The following is a 1008-amino-acid chain: Collagen alpha-1(I) chain (1008 aa).

The disordered stretch occupies residues 1–1008 (GGISVPGPMG…PGPPGPPGPP (1008 aa)). Pro-18, Pro-21, Pro-23, Pro-32, Pro-35, Pro-38, Pro-52, Pro-67, Pro-73, Pro-82, and Pro-88 each carry 4-hydroxyproline. Over residues 55 to 69 (NGDDGEAGKPGRPGE) the composition is skewed to basic and acidic residues. Position 91 is a 5-hydroxylysine; alternate (Lys-91). O-linked (Gal...) hydroxylysine; alternate glycosylation occurs at Lys-91. A Phosphoserine modification is found at Ser-97. A compositionally biased stretch (low complexity) spans 105–121 (DAGPAGPKGEPGSPGEN). Pro-115, Pro-118, Pro-124, Pro-133, Pro-139, Pro-160, Pro-169, Pro-172, Pro-199, Pro-202, Pro-214, Pro-220, Pro-229, Pro-235, and Pro-238 each carry 4-hydroxyproline. Residues 139 to 157 (PGASGPAGARGNDGAAGAA) are compositionally biased toward low complexity. Over residues 159-171 (PPGPTGPAGPPGF) the composition is skewed to pro residues. Over residues 205–235 (AGAAGPAGNPGADGQPGAKGANGAPGIAGAP) the composition is skewed to low complexity. Over residues 236–255 (GFPGRGPSGPQGPSGPGPKG) the composition is skewed to gly residues. The residue at position 254 (Lys-254) is a 5-hydroxylysine. Pro-260, Pro-263, Pro-275, Pro-284, Pro-299, Pro-305, Pro-314, and Pro-320 each carry 4-hydroxyproline. The span at 309 to 318 (GERGGPGSRG) shows a compositional bias: gly residues. The residue at position 329 (Lys-329) is a 5-hydroxylysine. Pro-338, Pro-347, Pro-353, Pro-359, Pro-368, Pro-371, Pro-380, Pro-389, Pro-395, Pro-407, Pro-416, Pro-425, Pro-428, Pro-446, Pro-463, Pro-469, Pro-475, Pro-481, Pro-487, Pro-493, Pro-505, Pro-514, Pro-523, Pro-535, Pro-538, Pro-544, Pro-550, and Pro-559 each carry 4-hydroxyproline. The segment covering 362-388 (KGLTGSPGSPGPDGKTGPPGPAGQDGR) has biased composition (low complexity). The span at 397 to 416 (ARGQAGVMGFPGPKGAAGEP) shows a compositional bias: low complexity. Residues 475–484 (PGEAGKPGEQ) are compositionally biased toward low complexity. Residues 519–547 (PRGAPGNDGAKGDAGAPGAPGSQGAPGLQ) show a composition bias toward low complexity. Lys-571 is subject to 5-hydroxylysine. Residues Pro-577, Pro-592, and Pro-598 each carry the 4-hydroxyproline modification. Residues 604–618 (SGPSGPAGPTGARGA) are compositionally biased toward low complexity. Residue Ser-607 is modified to Phosphoserine. Residues Pro-619, Pro-625, Pro-628, Pro-637, Pro-643, Pro-661, Pro-670, and Pro-679 each carry the 4-hydroxyproline modification. Residues 631-658 (AGFAGPPGADGQPGAKGEPGDAGAKGDA) are compositionally biased toward low complexity. Residues 660 to 672 (PPGPAGPTGPPGP) are compositionally biased toward pro residues. At Lys-682 the chain carries 5-hydroxylysine. The span at 687 to 703 (SAGPPGATGFPGAAGRV) shows a compositional bias: low complexity. A 4-hydroxyproline mark is found at Pro-691 and Pro-697. Pro-705 is modified (3-hydroxyproline). A 4-hydroxyproline mark is found at Pro-706, Pro-717, Pro-738, Pro-747, Pro-755, Pro-764, Pro-781, Pro-790, Pro-793, Pro-799, Pro-814, Pro-820, Pro-826, Pro-835, and Pro-841. Residues 731 to 740 (ETGPAGRPGE) show a composition bias toward low complexity. Low complexity predominate over residues 752–764 (KGSPGADGPAGAP). Residues 813 to 823 (PPGPVGPPGLA) show a composition bias toward pro residues. Positions 825–840 (PPGESGREGSPGAEGS) are enriched in low complexity. Lys-850 is modified (5-hydroxylysine). A compositionally biased stretch (pro residues) spans 858 to 873 (PGPPGAPGAPGAPGPV). 4-hydroxyproline is present on residues Pro-861, Pro-864, and Pro-867. Positions 894–908 (AGPAGARGPAGPQGP) are enriched in low complexity. A compositionally biased stretch (basic and acidic residues) spans 909-923 (RGDKGETGEQGDRGI). Lys-912 is modified (5-hydroxylysine). Lys-924 carries the post-translational modification 5-hydroxylysine; alternate. A glycan (O-linked (Gal...) hydroxylysine; alternate) is linked at Lys-924. Pro-939, Pro-942, Pro-960, and Pro-975 each carry 4-hydroxyproline. Positions 942–975 (PGEQGPSGASGPAGPRGPPGSAGSPGKDGLNGLP) are enriched in low complexity. The residue at position 980 (Pro-980) is a 3-hydroxyproline. The residue at position 981 (Pro-981) is a 4-hydroxyproline. Positions 993–1008 (VGPPGPPGPPGPPGPP) are enriched in pro residues. Pro-995 bears the 3-hydroxyproline mark. At Pro-996 the chain carries 4-hydroxyproline. Position 998 is a 3-hydroxyproline (Pro-998). Pro-999 is subject to 4-hydroxyproline. Residue Pro-1001 is modified to 3-hydroxyproline. 3 positions are modified to 4-hydroxyproline: Pro-1002, Pro-1005, and Pro-1008.

The protein belongs to the fibrillar collagen family. Trimers of one alpha 2(I) and two alpha 1(I) chains. Contains mostly 4-hydroxyproline. Proline residues at the third position of the tripeptide repeating unit (G-X-Y) are hydroxylated in some or all of the chains. In terms of processing, contains 3-hydroxyproline at a few sites. This modification occurs on the first proline residue in the sequence motif Gly-Pro-Hyp, where Hyp is 4-hydroxyproline. Post-translationally, lysine residues at the third position of the tripeptide repeating unit (G-X-Y) are 5-hydroxylated in some or all of the chains. O-glycosylated on hydroxylated lysine residues. The O-linked glycan consists of a Glc-Gal disaccharide. Expressed in bones.

The protein resides in the secreted. It localises to the extracellular space. Its subcellular location is the extracellular matrix. In terms of biological role, type I collagen is a member of group I collagen (fibrillar forming collagen). This chain is Collagen alpha-1(I) chain, found in Paramylodon harlani (Harlan's ground sloth).